The primary structure comprises 264 residues: Regulatory protein RecX (264 aa).

Belongs to the RecX family.

Its subcellular location is the cytoplasm. Negatively modulates RecA activity. The sequence is that of Regulatory protein RecX from Bacillus subtilis (strain 168).